We begin with the raw amino-acid sequence, 214 residues long: Adenylate kinase (214 aa).

10-15 (GAGKGT) contacts ATP. Positions 30–59 (STGDMLRAAVKSGSELGKQAKDIMDAGKLV) are NMP. Residues Thr31, Arg36, 57–59 (KLV), 85–88 (GFPR), and Gln92 contribute to the AMP site. The LID stretch occupies residues 122–159 (GRRVHAPSGRVYHVKFNPPKVEGKDDVTGEELTTRKDD). ATP-binding positions include Arg123 and 132-133 (VY). Residues Arg156 and Arg167 each contribute to the AMP site. Lys192 is subject to N6-acetyllysine. Lys200 provides a ligand contact to ATP.

This sequence belongs to the adenylate kinase family. Monomer.

The protein localises to the cytoplasm. The enzyme catalyses AMP + ATP = 2 ADP. Its pathway is purine metabolism; AMP biosynthesis via salvage pathway; AMP from ADP: step 1/1. Functionally, catalyzes the reversible transfer of the terminal phosphate group between ATP and AMP. Plays an important role in cellular energy homeostasis and in adenine nucleotide metabolism. The sequence is that of Adenylate kinase from Escherichia coli O45:K1 (strain S88 / ExPEC).